Reading from the N-terminus, the 175-residue chain is Transcription factor E (175 aa).

The HTH TFE/IIEalpha-type domain maps to 3-88; it reads DNPLIQQVLF…TWKPSLEKLP (86 aa).

Belongs to the TFE family. Monomer. Interaction with RNA polymerase subunits RpoF and RpoE is necessary for Tfe stimulatory transcription activity. Able to interact with Tbp and RNA polymerase in the absence of DNA promoter. Interacts both with the preinitiation and elongation complexes.

Functionally, transcription factor that plays a role in the activation of archaeal genes transcribed by RNA polymerase. Facilitates transcription initiation by enhancing TATA-box recognition by TATA-box-binding protein (Tbp), and transcription factor B (Tfb) and RNA polymerase recruitment. Not absolutely required for transcription in vitro, but particularly important in cases where Tbp or Tfb function is not optimal. It dynamically alters the nucleic acid-binding properties of RNA polymerases by stabilizing the initiation complex and destabilizing elongation complexes. Seems to translocate with the RNA polymerase following initiation and acts by binding to the non template strand of the transcription bubble in elongation complexes. The sequence is that of Transcription factor E from Methanococcus vannielii (strain ATCC 35089 / DSM 1224 / JCM 13029 / OCM 148 / SB).